We begin with the raw amino-acid sequence, 28 residues long: uncharacterized protein (28 aa).

The segment covering 1–18 (MLPRKYKPAYKKQAHRVK) has biased composition (basic residues). Positions 1-28 (MLPRKYKPAYKKQAHRVKSNPQPAYTFQ) are disordered. The segment covering 19-28 (SNPQPAYTFQ) has biased composition (polar residues).

This is an uncharacterized protein from Saccharomyces cerevisiae (strain ATCC 204508 / S288c) (Baker's yeast).